The sequence spans 368 residues: MNDPLASAAEARSATVRLAVDCMGGDHGPSVTLPACRAFLAAHPGAELLLVGRPEALAPAAGWERCTLVSASEVVAMDDPVEVALRRKRDSSLRVAISQVKPVDGVAAAQACVSAGNTGALMAVARYVLKTLDGIDRPAIATVMPNQLDGHTTVLDLGANVDCTAEHLLQFAVMGSALVAAVEGKANPSVGLLNIGEEAIKGSETIKRAGELLRAAAAGGQLNFVGNVEGNDIFTGRTDIVVCDGFVGNVALKTAEGLASMLSSFIRQEFTRSWYSKLAALVALPVLRHFKNRVDHRRYNGAALLGLRGLVFKSHGSADAFAFEQALNRAYDAARNRLLDRVHDRISATLQALPADAGAPDGQVPEAA.

The protein belongs to the PlsX family. As to quaternary structure, homodimer. Probably interacts with PlsY.

It is found in the cytoplasm. The catalysed reaction is a fatty acyl-[ACP] + phosphate = an acyl phosphate + holo-[ACP]. It functions in the pathway lipid metabolism; phospholipid metabolism. Functionally, catalyzes the reversible formation of acyl-phosphate (acyl-PO(4)) from acyl-[acyl-carrier-protein] (acyl-ACP). This enzyme utilizes acyl-ACP as fatty acyl donor, but not acyl-CoA. This chain is Phosphate acyltransferase, found in Methylibium petroleiphilum (strain ATCC BAA-1232 / LMG 22953 / PM1).